The sequence spans 136 residues: Ribosome-binding factor A (136 aa).

The protein belongs to the RbfA family. In terms of assembly, monomer. Binds 30S ribosomal subunits, but not 50S ribosomal subunits or 70S ribosomes.

Its subcellular location is the cytoplasm. In terms of biological role, one of several proteins that assist in the late maturation steps of the functional core of the 30S ribosomal subunit. Associates with free 30S ribosomal subunits (but not with 30S subunits that are part of 70S ribosomes or polysomes). Required for efficient processing of 16S rRNA. May interact with the 5'-terminal helix region of 16S rRNA. The polypeptide is Ribosome-binding factor A (Rhodopseudomonas palustris (strain BisB5)).